The primary structure comprises 721 residues: MYFLKKIVNLFSSKIESEDNNVKKDDLTQPRKQSPEARKRRNRRIIFWLIILLIIGTIIGVIIYFSVRKEYDNVIVKSAQTEVVNNKKVLYLNTIRPNSTQITRYTIDEDQLLTARVNILNNTNFQIISNASSLGLSRISFNIVREGVEKFKLGETNIYAPISGNTNNQWNWLTSIITQNAGIPSSGFNPQVIISPLISIIFFIIFLYIILRVSKAQSDSLLGTNKANAKLTKSGVRFSDVAGIAEVKEELIEIVDFLKEPKKYVAAGARIPKGVMLYGPPGTGKTLIAKAVAGEANVPFFQTTGSSFEDTFVGVGARRVRELFEKARKSAPAIIFIDEIDSVAKKRGNSLTAVQDQTINQLLSELDGFDTSSGVIVMAATNRLDTLDDAILRPGRFDRQISVNLPDILEREQILRIHSRNKNLSAKVSLEDIARRTAGFSGAQLENVLNEAALLSVRDKATSIHMNHLDEAIDRVIAGPSRPNKVISEREREQVSYHEAGHALIGLYSPGADVVQKITIVARGRAAGYTLQTPERNENILQNKTELISRVRTALGGRAAEELIYGPNEITTGAANDFYKITNIVRAMVASFGMTDVGLTQYIATEGVDNPYRNSYSEQTALAIDIEIEKIIQREYKIVKEMINEHREELELIVQTLLELETILKPQIDYIHQYKQLPPEVIANKNKREASQKQANSSVEEAKVVDDEESIKDKEKDQKSN.

Over 1-44 the chain is Cytoplasmic; that stretch reads MYFLKKIVNLFSSKIESEDNNVKKDDLTQPRKQSPEARKRRNRR. The chain crosses the membrane as a helical span at residues 45–65; it reads IIFWLIILLIIGTIIGVIIYF. The Extracellular portion of the chain corresponds to 66 to 190; that stretch reads SVRKEYDNVI…AGIPSSGFNP (125 aa). A helical membrane pass occupies residues 191-211; the sequence is QVIISPLISIIFFIIFLYIIL. The Cytoplasmic segment spans residues 212–721; sequence RVSKAQSDSL…KDKEKDQKSN (510 aa). 279-286 contributes to the ATP binding site; the sequence is GPPGTGKT. His-498 is a binding site for Zn(2+). The active site involves Glu-499. Zn(2+) contacts are provided by His-502 and Asp-577. Residues 686–721 form a disordered region; it reads NKREASQKQANSSVEEAKVVDDEESIKDKEKDQKSN. Basic and acidic residues predominate over residues 700–721; the sequence is EEAKVVDDEESIKDKEKDQKSN.

The protein in the central section; belongs to the AAA ATPase family. This sequence in the C-terminal section; belongs to the peptidase M41 family. In terms of assembly, homohexamer. Requires Zn(2+) as cofactor.

It localises to the cell membrane. Functionally, acts as a processive, ATP-dependent zinc metallopeptidase for both cytoplasmic and membrane proteins. Plays a role in the quality control of integral membrane proteins. The chain is ATP-dependent zinc metalloprotease FtsH from Ureaplasma parvum serovar 3 (strain ATCC 27815 / 27 / NCTC 11736).